The chain runs to 182 residues: Bifunctional protein PyrR (182 aa).

A PRPP-binding motif is present at residues I99–T111.

It belongs to the purine/pyrimidine phosphoribosyltransferase family. PyrR subfamily. In terms of assembly, homodimer and homohexamer; in equilibrium.

It catalyses the reaction UMP + diphosphate = 5-phospho-alpha-D-ribose 1-diphosphate + uracil. Its function is as follows. Regulates transcriptional attenuation of the pyrimidine nucleotide (pyr) operon by binding in a uridine-dependent manner to specific sites on pyr mRNA. This disrupts an antiterminator hairpin in the RNA and favors formation of a downstream transcription terminator, leading to a reduced expression of downstream genes. In terms of biological role, also displays a weak uracil phosphoribosyltransferase activity which is not physiologically significant. This is Bifunctional protein PyrR from Caldicellulosiruptor bescii (strain ATCC BAA-1888 / DSM 6725 / KCTC 15123 / Z-1320) (Anaerocellum thermophilum).